Consider the following 301-residue polypeptide: Homoserine O-acetyltransferase (301 aa).

Cysteine 142 acts as the Acyl-thioester intermediate in catalysis. Substrate contacts are provided by lysine 163 and serine 192. The Proton acceptor role is filled by histidine 235. Glutamate 237 is an active-site residue. Arginine 249 lines the substrate pocket.

This sequence belongs to the MetA family.

It is found in the cytoplasm. The catalysed reaction is L-homoserine + acetyl-CoA = O-acetyl-L-homoserine + CoA. It participates in amino-acid biosynthesis; L-methionine biosynthesis via de novo pathway; O-acetyl-L-homoserine from L-homoserine: step 1/1. Transfers an acetyl group from acetyl-CoA to L-homoserine, forming acetyl-L-homoserine. In Bacillus cereus (strain 03BB102), this protein is Homoserine O-acetyltransferase.